A 303-amino-acid polypeptide reads, in one-letter code: DCN1-like protein 3 (303 aa).

2 disordered regions span residues 1 to 41 (MGQC…HLSI) and 62 to 83 (EASQ…TGAE). A lipid anchor (N-myristoyl glycine) is attached at Gly-2. One can recognise a DCUN1 domain in the interval 85–277 (SSVQRIEELF…LFDTFVEWEM (193 aa)). Positions 284–303 (EETKCIPCSGTDDQSTEGQT) are disordered. A compositionally biased stretch (polar residues) spans 294–303 (TDDQSTEGQT).

In terms of assembly, may interact (via the DCUN1 domain) with unneddylated cullins.

It is found in the cell membrane. The protein localises to the cytoplasm. Its subcellular location is the nucleus. The protein resides in the perinuclear region. In terms of biological role, contributes to the neddylation of all cullins by transferring NEDD8 from N-terminally acetylated NEDD8-conjugating E2s enzyme to different cullin C-terminal domain-RBX complexes. At the cell membrane, can promote and as well inhibit cullins neddylation. This Xenopus tropicalis (Western clawed frog) protein is DCN1-like protein 3.